A 342-amino-acid polypeptide reads, in one-letter code: Phospho-N-acetylmuramoyl-pentapeptide-transferase (342 aa).

The next 10 helical transmembrane spans lie at 8–28 (VAQP…VIAP), 58–78 (GIPS…TAIF), 86–106 (IWVI…DDYL), 116–136 (ISLE…LIFL), 152–172 (GLID…VGSS), 184–204 (LATL…HLSL), 213–233 (VVGA…LSFL), 242–262 (VFMG…MSVM), 267–287 (FIYA…MAQV), and 318–338 (IVTR…AAII).

It belongs to the glycosyltransferase 4 family. MraY subfamily. The cofactor is Mg(2+).

It is found in the cell inner membrane. The enzyme catalyses UDP-N-acetyl-alpha-D-muramoyl-L-alanyl-gamma-D-glutamyl-meso-2,6-diaminopimeloyl-D-alanyl-D-alanine + di-trans,octa-cis-undecaprenyl phosphate = di-trans,octa-cis-undecaprenyl diphospho-N-acetyl-alpha-D-muramoyl-L-alanyl-D-glutamyl-meso-2,6-diaminopimeloyl-D-alanyl-D-alanine + UMP. Its pathway is cell wall biogenesis; peptidoglycan biosynthesis. In terms of biological role, catalyzes the initial step of the lipid cycle reactions in the biosynthesis of the cell wall peptidoglycan: transfers peptidoglycan precursor phospho-MurNAc-pentapeptide from UDP-MurNAc-pentapeptide onto the lipid carrier undecaprenyl phosphate, yielding undecaprenyl-pyrophosphoryl-MurNAc-pentapeptide, known as lipid I. In Anaplasma marginale (strain Florida), this protein is Phospho-N-acetylmuramoyl-pentapeptide-transferase.